The chain runs to 145 residues: Peptide methionine sulfoxide reductase MsrB (145 aa).

In terms of domain architecture, MsrB spans 4-127; that stretch reads SDELKQRIGD…NSAALKFIPY (124 aa). Cysteine 116 (nucleophile) is an active-site residue.

Belongs to the MsrB Met sulfoxide reductase family.

It carries out the reaction L-methionyl-[protein] + [thioredoxin]-disulfide + H2O = L-methionyl-(R)-S-oxide-[protein] + [thioredoxin]-dithiol. This Streptococcus pyogenes serotype M1 protein is Peptide methionine sulfoxide reductase MsrB.